We begin with the raw amino-acid sequence, 401 residues long: Succinyl-diaminopimelate desuccinylase (401 aa).

H82 is a Zn(2+) binding site. D84 is an active-site residue. Zn(2+) is bound at residue D115. E149 functions as the Proton acceptor in the catalytic mechanism. Zn(2+) contacts are provided by E150, E178, and H364.

Belongs to the peptidase M20A family. DapE subfamily. As to quaternary structure, homodimer. It depends on Zn(2+) as a cofactor. Co(2+) serves as cofactor.

It carries out the reaction N-succinyl-(2S,6S)-2,6-diaminopimelate + H2O = (2S,6S)-2,6-diaminopimelate + succinate. It functions in the pathway amino-acid biosynthesis; L-lysine biosynthesis via DAP pathway; LL-2,6-diaminopimelate from (S)-tetrahydrodipicolinate (succinylase route): step 3/3. Its function is as follows. Catalyzes the hydrolysis of N-succinyl-L,L-diaminopimelic acid (SDAP), forming succinate and LL-2,6-diaminopimelate (DAP), an intermediate involved in the bacterial biosynthesis of lysine and meso-diaminopimelic acid, an essential component of bacterial cell walls. The polypeptide is Succinyl-diaminopimelate desuccinylase (Verminephrobacter eiseniae (strain EF01-2)).